Here is a 146-residue protein sequence, read N- to C-terminus: MPTPKKGARLGGSPSHQRKILSNLAAQLFEHGAIRTTDAKAKLLRPYAEKLITKAKSGTLADRRNVAKLIPNKEIISVLFDDIAPKVADRSGGYTRIIKLENRKGDNAPMSQISLVTEELASSEASRATRAAASKKAEEEAASEAE.

Over residues 124–134 (EASRATRAAAS) the composition is skewed to low complexity. Residues 124 to 146 (EASRATRAAASKKAEEEAASEAE) form a disordered region.

Belongs to the bacterial ribosomal protein bL17 family. Part of the 50S ribosomal subunit. Contacts protein L32.

This Corynebacterium kroppenstedtii (strain DSM 44385 / JCM 11950 / CIP 105744 / CCUG 35717) protein is Large ribosomal subunit protein bL17.